We begin with the raw amino-acid sequence, 503 residues long: Discoidin, CUB and LCCL domain-containing protein 1 (503 aa).

The first 25 residues, 1 to 25 (MGTGAGGPSVLALLFAVCAPLRLQA), serve as a signal peptide directing secretion. Over 26–250 (EELGDGCGHI…FTTPGMNITT (225 aa)) the chain is Extracellular. 4 disulfide bridges follow: Cys32–Cys59, Cys85–Cys103, Cys149–Cys165, and Cys169–Cys191. Residues 32 to 141 (CGHIVTSQDS…RGFLLTYASS (110 aa)) enclose the CUB domain. Asn55 carries an N-linked (GlcNAc...) asparagine glycan. Residues 143–239 (HPDLITCLER…RHGSLSEKRF (97 aa)) enclose the LCCL domain. Asn247 carries N-linked (GlcNAc...) asparagine glycosylation. Residues 251–271 (VAIPSVIFIALLLTGMGIFAI) form a helical membrane-spanning segment. Residues 272 to 503 (CRKRKKKGNP…LNQTAMTALL (232 aa)) lie on the Cytoplasmic side of the membrane. The residue at position 305 (Ser305) is a Phosphoserine. Thr406 carries the post-translational modification Phosphothreonine. Residues 410 to 503 (QSGYRVPGPR…LNQTAMTALL (94 aa)) form a disordered region. Over residues 494–503 (LNQTAMTALL) the composition is skewed to polar residues.

The protein localises to the membrane. In Mus musculus (Mouse), this protein is Discoidin, CUB and LCCL domain-containing protein 1 (Dcbld1).